Here is a 232-residue protein sequence, read N- to C-terminus: Zinc import ATP-binding protein ZnuC (232 aa).

Residues 5–220 (VNLKNIFVFY…PSFIEMFGCY (216 aa)) form the ABC transporter domain. 37-44 (GPNGSGKS) contributes to the ATP binding site.

This sequence belongs to the ABC transporter superfamily. Zinc importer (TC 3.A.1.15.5) family. In terms of assembly, the complex is composed of two ATP-binding proteins (ZnuC), two transmembrane proteins (ZnuB) and a solute-binding protein (ZnuA).

It localises to the cell membrane. The enzyme catalyses Zn(2+)(out) + ATP(in) + H2O(in) = Zn(2+)(in) + ADP(in) + phosphate(in) + H(+)(in). Its function is as follows. Part of the ABC transporter complex ZnuABC involved in zinc import. Responsible for energy coupling to the transport system. The chain is Zinc import ATP-binding protein ZnuC from Wigglesworthia glossinidia brevipalpis.